Reading from the N-terminus, the 4061-residue chain is Hybrid PKS-NRPS synthetase tasS (4061 aa).

Positions Gln-7–Gly-472 constitute a Ketosynthase family 3 (KS3) domain. Cys-180 is a catalytic residue. A malonyl-CoA:ACP transacylase (MAT) domain region spans residues Val-586–Leu-911. Residues His-977–Pro-1113 are N-terminal hotdog fold. The dehydratase (DH) domain stretch occupies residues His-977 to Gly-1280. The region spanning His-977–Gln-1282 is the PKS/mFAS DH domain. Catalysis depends on His-1010, which acts as the Proton acceptor; for dehydratase activity. The interval Leu-1128–Gln-1282 is C-terminal hotdog fold. Asp-1188 (proton donor; for dehydratase activity) is an active-site residue. The methyltransferase (MT) domain stretch occupies residues Leu-1425 to Pro-1619. The interval Thr-2153–Gly-2325 is ketoreductase (KR) domain. A Carrier 1 domain is found at Glu-2437–Leu-2516. Residue Ser-2475 is modified to O-(pantetheine 4'-phosphoryl)serine. Positions Glu-2527–Ser-2617 are disordered. Low complexity predominate over residues Thr-2556 to Ser-2576. Residues Glu-2577 to Glu-2592 are compositionally biased toward polar residues. The interval Gln-2632–Glu-3077 is condensation (C) domain. An adenylation (A) (KR) domain region spans residues Gln-3103–Ile-3510. One can recognise a Carrier 2 domain in the interval Gln-3633–Val-3712. Ser-3672 carries the O-(pantetheine 4'-phosphoryl)serine modification. Residues Asp-3813–Ala-3969 form a reductase (RED) domain region.

In the C-terminal section; belongs to the NRP synthetase family.

It carries out the reaction (2S,4S)-4-hydroxy-4-methylglutamate + 8 malonyl-CoA + 3 S-adenosyl-L-methionine + ATP + 8 NADPH + 11 H(+) = (2S)-3-[(2S)-3,5-dioxo-4-[(2E,4R,6R,8E,10E,12E)-4,6,12-trimethyltetradeca-2,8,10,12-tetraenoyl]pyrrolidin-2-yl]-2-hydroxy-2-methylpropanoate + AMP + 3 S-adenosyl-L-homocysteine + 8 CO2 + diphosphate + 8 NADP(+) + 8 CoA + 6 H2O. The protein operates within secondary metabolite biosynthesis. Functionally, hybrid PKS-NRPS synthetase; part of the gene cluster that mediates the biosynthesis of the tetramic acids Sch210971 and Sch210972, potential anti-HIV fungal natural product that contain a decalin core. The PKS module of tasS together with the enoylreductase tasC catalyze the formation of the polyketide unit which is then conjugated to 4-hydroxyl-4-methyl glutamate (HMG) by the condensation domain of the tasS NRPS module. One unique structural feature of Sch210971 and Sch210972 is the tetramic acid motif proposed to be derived from the non-proteinogenic amino acid HMG, by a Dieckmann-type condensation catalyzed by the reductase domain of tasS. The aldolase tasA catalyzes the aldol condensation of 2 molecules of pyruvic acid to yield the intermediate 4-hydroxyl-4-methyl-2-oxoglutarate (HMOG), which can then be stereoselectively transaminated, may be by tasG, to form HMG. The Diels-Alderase tas3 then uses the Dieckmann product of tasS as substrate and catalyzes the Diels-Alder cycloaddition to form the decalin ring of Sch210971 and Sch210972. The chain is Hybrid PKS-NRPS synthetase tasS from Hapsidospora irregularis.